A 415-amino-acid chain; its full sequence is Histone acetyltransferase type B subunit 2 (415 aa).

WD repeat units lie at residues 118-158, 163-203, 211-251, 256-296, and 307-347; these read ENNF…KTAI, PHED…ATDL, THKD…EPVS, PESE…TKSA, and GHSD…EEQA. An interaction with the histone H4 N-terminus region spans residues 349–353; that stretch reads EDAED. The WD 6 repeat unit spans residues 364–404; it reads GHTGAVTDLSWCPYKDWTIGSVADDNIVHLWEIGKTLLNAE.

Belongs to the WD repeat RBAP46/RBAP48/MSI1 family. In terms of assembly, component of the HAT-B complex composed of at least HAT1 and HAT2. The HAT-B complex binds to histone H4 tail.

Its subcellular location is the cytoplasm. The protein resides in the nucleus. Regulatory subunit of the histone acetylase B (HAT-B) complex. The complex acetylates 'Lys-12' of histone H4 which is required for telomeric silencing. The polypeptide is Histone acetyltransferase type B subunit 2 (HAT2) (Debaryomyces hansenii (strain ATCC 36239 / CBS 767 / BCRC 21394 / JCM 1990 / NBRC 0083 / IGC 2968) (Yeast)).